The sequence spans 115 residues: Large ribosomal subunit protein uL22 (115 aa).

The protein belongs to the universal ribosomal protein uL22 family. In terms of assembly, part of the 50S ribosomal subunit.

Functionally, this protein binds specifically to 23S rRNA; its binding is stimulated by other ribosomal proteins, e.g. L4, L17, and L20. It is important during the early stages of 50S assembly. It makes multiple contacts with different domains of the 23S rRNA in the assembled 50S subunit and ribosome. In terms of biological role, the globular domain of the protein is located near the polypeptide exit tunnel on the outside of the subunit, while an extended beta-hairpin is found that lines the wall of the exit tunnel in the center of the 70S ribosome. The sequence is that of Large ribosomal subunit protein uL22 from Streptomyces griseus subsp. griseus (strain JCM 4626 / CBS 651.72 / NBRC 13350 / KCC S-0626 / ISP 5235).